The primary structure comprises 1144 residues: Alpha-mannosidase 2 (1144 aa).

The Cytoplasmic portion of the chain corresponds to 1–5 (MKLSR). Residues 6 to 26 (QFTVFGSAIFCVVIFSLYLML) traverse the membrane as a helical; Signal-anchor for type II membrane protein segment. Over 27–1144 (DRGHLDYPRN…EISTFRIQLR (1118 aa)) the chain is Lumenal. Asn78 carries an N-linked (GlcNAc...) asparagine glycan. A phosphoserine mark is found at Ser80 and Ser82. Asn93 carries N-linked (GlcNAc...) asparagine glycosylation. Residues His175, Asp177, Asp289, and His569 each coordinate Zn(2+). The active-site Nucleophile is the Asp289. Asn1125 carries N-linked (GlcNAc...) asparagine glycosylation.

It belongs to the glycosyl hydrolase 38 family. Homodimer; disulfide-linked. Requires Zn(2+) as cofactor. In terms of processing, glycosylated.

Its subcellular location is the golgi apparatus membrane. It catalyses the reaction N(4)-{beta-D-GlcNAc-(1-&gt;2)-alpha-D-Man-(1-&gt;3)-[alpha-D-Man-(1-&gt;3)-[alpha-D-Man-(1-&gt;6)]-alpha-D-Man-(1-&gt;6)]-beta-D-Man-(1-&gt;4)-beta-D-GlcNAc-(1-&gt;4)-beta-D-GlcNAc}-L-asparaginyl-[protein] + 2 H2O = 2 alpha-D-mannopyranose + an N(4)-{beta-D-GlcNAc-(1-&gt;2)-alpha-D-Man-(1-&gt;3)-[alpha-D-Man-(1-&gt;6)]-beta-D-Man-(1-&gt;4)-beta-D-GlcNAc-(1-&gt;4)-beta-D-GlcNAc}-L-asparaginyl-[protein]. Its pathway is protein modification; protein glycosylation. Catalyzes the first committed step in the biosynthesis of complex N-glycans. It controls conversion of high mannose to complex N-glycans; the final hydrolytic step in the N-glycan maturation pathway. This Homo sapiens (Human) protein is Alpha-mannosidase 2 (MAN2A1).